We begin with the raw amino-acid sequence, 942 residues long: Mitogen-activated protein kinase kinase kinase 14 (942 aa).

Basic residues predominate over residues 136-152 (GKRHGKARKKRRKKRSK). 2 disordered regions span residues 136 to 156 (GKRH…SLAQ) and 291 to 326 (VSGQ…SCPS). The 256-residue stretch at 402–657 (MTHQPRVGRG…ELRRKVGKAL (256 aa)) folds into the Protein kinase domain. Residues 403–655 (THQPRVGRGS…AMELRRKVGK (253 aa)) are interaction with ZFP91. ATP is bound by residues 408 to 416 (VGRGSFGEV) and lysine 431. The active-site Proton acceptor is aspartate 517. Residue threonine 561 is modified to Phosphothreonine. Disordered regions lie at residues 660–756 (VGGL…FPDR) and 801–823 (SDDS…SSGV). Over residues 707–720 (EPQPPLPPEPPEPS) the composition is skewed to pro residues. The segment covering 809–823 (SKASQSSRDTLSSGV) has biased composition (polar residues).

It belongs to the protein kinase superfamily. STE Ser/Thr protein kinase family. MAP kinase kinase kinase subfamily. As to quaternary structure, interacts with TRAF2, TRAF3, TRAF5, TRAF6, IKKA and NF-kappa-B2/P100. Interacts with PELI3. Interacts with NIBP; the interaction is direct. Interacts with ARRB1 and ARRB2. Interacts with GRB10. Interacts with ZFP91. Interacts with NLRP12; this interaction promotes proteasomal degradation of MAP3K14. Directly interacts with DDX3X. Interacts (via C-terminus and kinase domain) with PPPC3A (via N-terminus) and PPP3CB. Phosphorylation at Thr-561 is required to activate its kinase activity and 'Lys-63'-linked polyubiquitination. Phosphorylated by CHUK/IKKA leading to MAP3K14 destabilization. Autophosphorylated. In terms of processing, ubiquitinated. Undergoes both 'Lys-48'- and 'Lys-63'-linked polyubiquitination. 'Lys-48'-linked polyubiquitination leads to its degradation by the proteasome, while 'Lys-63'-linked polyubiquitination stabilizes and activates it.

Its subcellular location is the cytoplasm. It catalyses the reaction L-seryl-[protein] + ATP = O-phospho-L-seryl-[protein] + ADP + H(+). The enzyme catalyses L-threonyl-[protein] + ATP = O-phospho-L-threonyl-[protein] + ADP + H(+). Functionally, lymphotoxin beta-activated kinase which seems to be exclusively involved in the activation of NF-kappa-B and its transcriptional activity. Phosphorylates CHUK/IKKA. Promotes proteolytic processing of NFKB2/P100, which leads to activation of NF-kappa-B via the non-canonical pathway. Has an essential role in the non-canonical NF-kappa-B signalining that regulates genes encoding molecules involved in B-cell survival, lymphoid organogenesis, and immune response. Could act in a receptor-selective manner. The polypeptide is Mitogen-activated protein kinase kinase kinase 14 (Mus musculus (Mouse)).